We begin with the raw amino-acid sequence, 74 residues long: uncharacterized protein (74 aa).

This is an uncharacterized protein from Rickettsia conorii (strain ATCC VR-613 / Malish 7).